The following is a 63-amino-acid chain: uncharacterized protein (63 aa).

Residues 1-21 form the signal peptide; sequence MYLSLLLILLAWTLWLGNSLA.

This is an uncharacterized protein from Haemophilus influenzae (strain ATCC 51907 / DSM 11121 / KW20 / Rd).